The following is a 647-amino-acid chain: MGKIRKLDDQLSNLIAAGEVVERPASVVKELVENSIDANSTSIEIHLEEAGLSKIRIIDNGDGIAEEDCIVAFERHATSKIKDENDLFRIRTLGFRGEALPSIASVSELELITSTGDAPGTHLIIKGGDIIKQEKTASRKGTDITVQNLFFNTPARLKYMKTIHTELGNITDIVYRIAMSHPEVSLKLFHNEKKLLHTSGNGDVRQVLASIYSIQVAKKLVPIEAESLDFTIQGYVTLPEVTRASRNYMSTIVNGRYVRNFVLMKAIQQGYHTLLPVGRYPIGFLSIEMDPMLVDVNVHPAKLEVRFSKEQELLKLIEETLQAAFKKIQLIPDAGVTTKKKEKDESVQEQFQFEHAKPKEPSMPEIVLPTGMDEKQEEPQAVKQPTQLWQPPKQEWQPPQSLVREEQSWQPSTKPIIEEPIQEEKSWDSNEEGFELEELEEEVREIKEIEMNGNDLPPLYPIGQMHGTYIFAQNDKGLYMIDQHAAQERINYEYFRDKVGRVAQEVQELLVPYRIDLSLTEFLRVEEQLEELKKVGLFLEQFGHQSFIVRSHPTWFPKGQETEIIDEMMEQVVKLKKVDIKKLREEAAIMMSCKASIKANQYLTNDQIFALLEELRTTTNPYTCPHGRPILVHHSTYELEKMFKRVM.

Positions 375–433 are disordered; the sequence is KQEEPQAVKQPTQLWQPPKQEWQPPQSLVREEQSWQPSTKPIIEEPIQEEKSWDSNEEG. A compositionally biased stretch (low complexity) spans 387–400; sequence QLWQPPKQEWQPPQ.

This sequence belongs to the DNA mismatch repair MutL/HexB family.

Functionally, this protein is involved in the repair of mismatches in DNA. It is required for dam-dependent methyl-directed DNA mismatch repair. May act as a 'molecular matchmaker', a protein that promotes the formation of a stable complex between two or more DNA-binding proteins in an ATP-dependent manner without itself being part of a final effector complex. The polypeptide is DNA mismatch repair protein MutL (Bacillus cereus (strain AH820)).